The primary structure comprises 375 residues: Alpha-2,8-sialyltransferase 8B (375 aa).

The Cytoplasmic portion of the chain corresponds to 1–6 (MQLQFR). A helical; Signal-anchor for type II membrane protein transmembrane segment spans residues 7–23 (SWMLAALTLLVVFLIFA). Topologically, residues 24 to 375 (DISEIEEEIG…LTVGQCDGAT (352 aa)) are lumenal. N-linked (GlcNAc...) asparagine glycans are attached at residues N60, N72, N89, and N134. 2 cysteine pairs are disulfide-bonded: C157/C307 and C171/C371. N162 and N185 together coordinate CMP-N-acetyl-beta-neuraminate. N-linked (GlcNAc...) asparagine glycosylation is found at N219 and N234. CMP-N-acetyl-beta-neuraminate-binding residues include T294, T295, G296, W316, Y329, and H330. H346 functions as the Proton donor/acceptor in the catalytic mechanism.

Belongs to the glycosyltransferase 29 family. In terms of processing, autopolysialylated. Autopolysialylation is not a prerequisite for the polysialylation acitity, but enhances the polysialylation acitity.

Its subcellular location is the golgi apparatus membrane. It localises to the secreted. The protein localises to the cell membrane. It carries out the reaction [N-acetyl-alpha-D-neuraminosyl-(2-&gt;8)](n) + CMP-N-acetyl-beta-neuraminate = [N-acetyl-alpha-D-neuraminosyl-(2-&gt;8)](n+1) + CMP + H(+). Its pathway is protein modification; protein glycosylation. Catalyzes the transfer of a sialic acid from a CMP-linked sialic acid donor onto a terminal alpha-2,3-, alpha-2,6-, or alpha-2,8-linked sialic acid of an N-linked glycan acceptor through alpha-2,8-linkages. Therefore, participates in polysialic acid synthesis on various sialylated N-acetyllactosaminyl oligosaccharides (alpha-2,3-, alpha-2,6-, or alpha-2,8-linked sialic acid), including NCAM1, NCAM1 N-glycans, FETUB N-glycans, and to a lesser extent sialylparagloboside (SPG) and AHSG, which does not require the initial addition of an alpha 2,8-sialic acid. However, does not exhibit sialic acid-polymerase activity. Catalyzes polysialic acid synthesis in the hippocampal on NCAM1 and supports neurite outgrowth. ST8SIA2-mediated polysialylation influences on oligodendrocyte differentiation and may promote the integrity of myelin and axons. The protein is Alpha-2,8-sialyltransferase 8B of Mus musculus (Mouse).